The following is a 94-amino-acid chain: MSRSLKKGPFVAESLIKKIEEMNEKGEKKVIKTWSRSSTIFPQMLGHTIAVHDGRKHVPVYISEDMVGHKLGEFVLTRTFKGHVDKTEKGTRVK.

It belongs to the universal ribosomal protein uS19 family.

Its function is as follows. Protein S19 forms a complex with S13 that binds strongly to the 16S ribosomal RNA. The sequence is that of Small ribosomal subunit protein uS19 from Clostridium novyi (strain NT).